The primary structure comprises 253 residues: Phosphate import ATP-binding protein PstB 1 (253 aa).

In terms of domain architecture, ABC transporter spans 7 to 248 (LQIRDLSVYY…PKRKETEDYI (242 aa)). 39–46 (GPSGSGKS) lines the ATP pocket.

This sequence belongs to the ABC transporter superfamily. Phosphate importer (TC 3.A.1.7) family. The complex is composed of two ATP-binding proteins (PstB), two transmembrane proteins (PstC and PstA) and a solute-binding protein (PstS).

The protein resides in the cell membrane. It carries out the reaction phosphate(out) + ATP + H2O = ADP + 2 phosphate(in) + H(+). Its function is as follows. Part of the ABC transporter complex PstSACB involved in phosphate import. Responsible for energy coupling to the transport system. The protein is Phosphate import ATP-binding protein PstB 1 of Streptococcus pyogenes serotype M2 (strain MGAS10270).